A 368-amino-acid polypeptide reads, in one-letter code: Protein mab-21-like 3 (368 aa).

The protein belongs to the mab-21 family.

The polypeptide is Protein mab-21-like 3 (mab21L3) (Xenopus laevis (African clawed frog)).